We begin with the raw amino-acid sequence, 35 residues long: Photosystem II reaction center protein M (35 aa).

A helical membrane pass occupies residues 5 to 25 (ILAVIATALFIIIPTSFLLIL).

Belongs to the PsbM family. As to quaternary structure, PSII is composed of 1 copy each of membrane proteins PsbA, PsbB, PsbC, PsbD, PsbE, PsbF, PsbH, PsbI, PsbJ, PsbK, PsbL, PsbM, PsbT, PsbX, PsbY, PsbZ, Psb30/Ycf12, at least 3 peripheral proteins of the oxygen-evolving complex and a large number of cofactors. It forms dimeric complexes.

Its subcellular location is the plastid. It is found in the chloroplast thylakoid membrane. One of the components of the core complex of photosystem II (PSII). PSII is a light-driven water:plastoquinone oxidoreductase that uses light energy to abstract electrons from H(2)O, generating O(2) and a proton gradient subsequently used for ATP formation. It consists of a core antenna complex that captures photons, and an electron transfer chain that converts photonic excitation into a charge separation. This subunit is found at the monomer-monomer interface. The protein is Photosystem II reaction center protein M of Staurastrum punctulatum (Green alga).